Here is a 500-residue protein sequence, read N- to C-terminus: DNA double-strand break repair helicase HerA (500 aa).

ATP is bound by residues Arg-142, 151–156, and 459–460; these read GSGKSN and KI.

Belongs to the HerA family. As to quaternary structure, homohexamer. Forms a complex with NurA.

The enzyme catalyses Couples ATP hydrolysis with the unwinding of duplex DNA at the replication fork by translocating in the 5'-3' direction. This creates two antiparallel DNA single strands (ssDNA). The leading ssDNA polymer is the template for DNA polymerase III holoenzyme which synthesizes a continuous strand.. It carries out the reaction ATP + H2O = ADP + phosphate + H(+). The catalysed reaction is Couples ATP hydrolysis with the unwinding of duplex DNA by translocating in the 3'-5' direction.. With respect to regulation, ATPase activity is stimulated in the presence of linear double-stranded (ds)DNA. Helicase activity requires the presence of NurA. LhrC-Core (Hel112) inhibits the exonuclease activity of the HerA-NurA complex on ss- and dsDNA, has no effect on the nicking activity of NurA. Involved in DNA double-strand break (DSB) repair. Probably acts with NurA to stimulate resection of the 5' strand and produce the long 3' single-strand that is required for RadA loading. NurA and HerA together stimulate the end-resection of six nucleotides of a linear DNA substrate. Has DNA-dependent ATPase activity and bidirectional DNA helicase activity. Preferentially binds single stranded (ss)DNA, bubble and semiforked DNA substrate over other DNA molecules tested. Stimulates the exo- but not endonuclease activity of NurA. The protein is DNA double-strand break repair helicase HerA of Saccharolobus solfataricus (strain ATCC 35092 / DSM 1617 / JCM 11322 / P2) (Sulfolobus solfataricus).